The sequence spans 382 residues: Mannitol-1-phosphate 5-dehydrogenase (382 aa).

NAD(+) is bound at residue 3-14 (VLHFGAGNIGRG).

Belongs to the mannitol dehydrogenase family.

The enzyme catalyses D-mannitol 1-phosphate + NAD(+) = beta-D-fructose 6-phosphate + NADH + H(+). The chain is Mannitol-1-phosphate 5-dehydrogenase from Sodalis glossinidius (strain morsitans).